A 206-amino-acid polypeptide reads, in one-letter code: Guanylate kinase (206 aa).

Positions 6 to 184 (GILFILSGPS…AVDKVKTIIK (179 aa)) constitute a Guanylate kinase-like domain. Position 13–20 (13–20 (GPSGVGKG)) interacts with ATP.

It belongs to the guanylate kinase family.

The protein localises to the cytoplasm. The enzyme catalyses GMP + ATP = GDP + ADP. Essential for recycling GMP and indirectly, cGMP. The polypeptide is Guanylate kinase (Oceanobacillus iheyensis (strain DSM 14371 / CIP 107618 / JCM 11309 / KCTC 3954 / HTE831)).